Reading from the N-terminus, the 392-residue chain is Multidrug resistance protein MdtL (392 aa).

The next 12 helical transmembrane spans lie at 4–24 (FLLC…MYLV), 38–58 (AQLH…MLFA), 69–89 (PVAI…AQVH), 95–115 (LIGR…AFAI), 131–151 (LLNG…HLIM), 158–178 (SLFY…VFIL), 209–229 (LLIT…SPVL), 246–266 (ALMA…LSLF), 270–290 (TLML…SLAT), 294–314 (VTLI…GVAM), 331–351 (VLGI…AIIG), and 357–377 (MLIG…LVVT).

Belongs to the major facilitator superfamily. DHA1 family. MdtL (TC 2.A.1.2.22) subfamily.

The protein resides in the cell inner membrane. The sequence is that of Multidrug resistance protein MdtL from Klebsiella pneumoniae subsp. pneumoniae (strain ATCC 700721 / MGH 78578).